Here is a 202-residue protein sequence, read N- to C-terminus: Proteasome subunit beta 1 (202 aa).

A propeptide (removed in mature form; by autocatalysis) is located at residue Met1. The Nucleophile role is filled by Thr2.

The protein belongs to the peptidase T1B family. As to quaternary structure, the 20S proteasome core is composed of 14 alpha and 14 beta subunits that assemble into four stacked heptameric rings, resulting in a barrel-shaped structure. The two inner rings, each composed of seven catalytic beta subunits, are sandwiched by two outer rings, each composed of seven alpha subunits. The catalytic chamber with the active sites is on the inside of the barrel. Has a gated structure, the ends of the cylinder being occluded by the N-termini of the alpha-subunits. Is capped at one or both ends by the proteasome regulatory ATPase, PAN.

The protein localises to the cytoplasm. The catalysed reaction is Cleavage of peptide bonds with very broad specificity.. Its activity is regulated as follows. The formation of the proteasomal ATPase PAN-20S proteasome complex, via the docking of the C-termini of PAN into the intersubunit pockets in the alpha-rings, triggers opening of the gate for substrate entry. Interconversion between the open-gate and close-gate conformations leads to a dynamic regulation of the 20S proteasome proteolysis activity. Its function is as follows. Component of the proteasome core, a large protease complex with broad specificity involved in protein degradation. The polypeptide is Proteasome subunit beta 1 (Pyrobaculum arsenaticum (strain DSM 13514 / JCM 11321 / PZ6)).